A 188-amino-acid polypeptide reads, in one-letter code: Guanylate kinase (188 aa).

In terms of domain architecture, Guanylate kinase-like spans 4 to 183 (RNIVVLTAPS…AVEETLTRIR (180 aa)). Residue 11–18 (APSGAGKT) participates in ATP binding.

This sequence belongs to the guanylate kinase family.

It is found in the cytoplasm. The catalysed reaction is GMP + ATP = GDP + ADP. Its function is as follows. Essential for recycling GMP and indirectly, cGMP. In Salinibacter ruber (strain DSM 13855 / M31), this protein is Guanylate kinase.